Reading from the N-terminus, the 250-residue chain is NH(3)-dependent NAD(+) synthetase (250 aa).

30–37 serves as a coordination point for ATP; that stretch reads GVSGGIDS. A Mg(2+)-binding site is contributed by Asp36. A deamido-NAD(+)-binding site is contributed by Arg117. Thr137 lines the ATP pocket. Mg(2+) is bound at residue Glu142. Deamido-NAD(+) is bound by residues Lys150 and Asp157. Positions 166 and 188 each coordinate ATP. Residue 234 to 235 coordinates deamido-NAD(+); it reads HK.

It belongs to the NAD synthetase family. Homodimer.

The catalysed reaction is deamido-NAD(+) + NH4(+) + ATP = AMP + diphosphate + NAD(+) + H(+). It participates in cofactor biosynthesis; NAD(+) biosynthesis; NAD(+) from deamido-NAD(+) (ammonia route): step 1/1. Functionally, catalyzes the ATP-dependent amidation of deamido-NAD to form NAD. Uses ammonia as a nitrogen source. The protein is NH(3)-dependent NAD(+) synthetase of Mannheimia succiniciproducens (strain KCTC 0769BP / MBEL55E).